The following is a 346-amino-acid chain: Immunoglobulin heavy constant alpha (346 aa).

Ig-like domains lie at 6–96 (PSIF…KSVD), 118–212 (PRLS…VSIT), and 221–323 (PQVH…KSID). Residues C26 and C83 are joined by a disulfide bond. N-linked (GlcNAc...) (complex) asparagine glycosylation occurs at N134. Disulfide bonds link C139–C196 and C243–C306. N333 carries N-linked (GlcNAc...) (complex) asparagine glycosylation.

In terms of assembly, immunoglobulins are composed of two identical heavy chains and two identical light chains; disulfide-linked. Monomeric or polymeric. Part of the secretory IgA (sIgA) complex that consists of two, four or five IgA monomers, and two additional non-Ig polypeptides, namely the JCHAIN and the secretory component (the proteolytic product of PIGR). In terms of processing, N-glycosylated. N-glycans attached to Asn-134 varies from differentially fucosylated complex and hybrid to sialylated with N-glycoyl neuraminic acid types: GlcNAc2Man3GlcNAc2(Fuc); GlcNAc1Man4GlcNAc2(Fuc); GlcNAc1Man4GlcNAc2; Gal1GlcNAc2Man3GlcNAc2(Fuc); GlcNAc2Man3GlcNAc2; Gal1GlcNAc2Man3GlcNAc2; GlcNAc1Man3GlcNAc2; GlcNAc1Man2GlcNAc2 and NeuGc1Gal1GlcNAc2Man3GlcNAc2(Fuc). N-glycans attached to Asn-333 are mainly fucosylated complex types: GlcNAc2Man3GlcNAc2; GlcNAc1Man3GlcNAc2; GlcNAc1Man3GlcNAc2(Fuc); GlcNAc2Man3GlcNAc2(Fuc); Gal1GlcNAc2Man3GlcNAc2(Fuc); NeuGc1Gal1GlcNAc1Man3GlcNAc2(Fuc); NeuGc1Gal1GlcNAc2Man3GlcNAc2(Fuc) and NeuAc1Gal1GlcNAc2Man3GlcNAc2(Fuc).

Its subcellular location is the secreted. The protein resides in the cell membrane. Functionally, constant region of immunoglobulin heavy chains. Immunoglobulins, also known as antibodies, are membrane-bound or secreted glycoproteins produced by B lymphocytes. In the recognition phase of humoral immunity, the membrane-bound immunoglobulins serve as receptors which, upon binding of a specific antigen, trigger the clonal expansion and differentiation of B lymphocytes into immunoglobulins-secreting plasma cells. Secreted immunoglobulins mediate the effector phase of humoral immunity, which results in the elimination of bound antigens. The antigen binding site is formed by the variable domain of one heavy chain, together with that of its associated light chain. Thus, each immunoglobulin has two antigen binding sites with remarkable affinity for a particular antigen. The variable domains are assembled by a process called V-(D)-J rearrangement and can then be subjected to somatic hypermutations which, after exposure to antigen and selection, allow affinity maturation for a particular antigen. Ig alpha is the major immunoglobulin class in body secretions. The chain is Immunoglobulin heavy constant alpha (IGHA) from Equus asinus (Donkey).